Consider the following 382-residue polypeptide: D-alanine--D-alanine ligase (382 aa).

In terms of domain architecture, ATP-grasp spans 161 to 372; sequence KVVFEAAGLQ…YAELIDELIY (212 aa). ATP is bound at residue 193 to 248; sequence VDRLGYPVFVKPARAGSSMGISKVDSLEGLDAAIAAAREHDLKLVIEAGIVGREIE. Residues Asp-326, Glu-339, and Asn-341 each coordinate Mg(2+).

It belongs to the D-alanine--D-alanine ligase family. The cofactor is Mg(2+). Requires Mn(2+) as cofactor.

It is found in the cytoplasm. It catalyses the reaction 2 D-alanine + ATP = D-alanyl-D-alanine + ADP + phosphate + H(+). Its pathway is cell wall biogenesis; peptidoglycan biosynthesis. Functionally, cell wall formation. This chain is D-alanine--D-alanine ligase, found in Arthrobacter sp. (strain FB24).